A 287-amino-acid chain; its full sequence is Ribosomal RNA small subunit methyltransferase A (287 aa).

Residues Asn18, Leu20, Gly45, Glu66, Asp91, and Asn118 each contribute to the S-adenosyl-L-methionine site.

It belongs to the class I-like SAM-binding methyltransferase superfamily. rRNA adenine N(6)-methyltransferase family. RsmA subfamily.

The protein resides in the cytoplasm. The enzyme catalyses adenosine(1518)/adenosine(1519) in 16S rRNA + 4 S-adenosyl-L-methionine = N(6)-dimethyladenosine(1518)/N(6)-dimethyladenosine(1519) in 16S rRNA + 4 S-adenosyl-L-homocysteine + 4 H(+). Specifically dimethylates two adjacent adenosines (A1518 and A1519) in the loop of a conserved hairpin near the 3'-end of 16S rRNA in the 30S particle. May play a critical role in biogenesis of 30S subunits. The polypeptide is Ribosomal RNA small subunit methyltransferase A (Haemophilus influenzae (strain ATCC 51907 / DSM 11121 / KW20 / Rd)).